Here is a 95-residue protein sequence, read N- to C-terminus: Small ribosomal subunit protein bS16 (95 aa).

The protein belongs to the bacterial ribosomal protein bS16 family.

The chain is Small ribosomal subunit protein bS16 from Thermotoga maritima (strain ATCC 43589 / DSM 3109 / JCM 10099 / NBRC 100826 / MSB8).